A 389-amino-acid chain; its full sequence is Lipid-A-disaccharide synthase (389 aa).

The protein belongs to the LpxB family.

The catalysed reaction is a lipid X + a UDP-2-N,3-O-bis[(3R)-3-hydroxyacyl]-alpha-D-glucosamine = a lipid A disaccharide + UDP + H(+). It functions in the pathway bacterial outer membrane biogenesis; LPS lipid A biosynthesis. In terms of biological role, condensation of UDP-2,3-diacylglucosamine and 2,3-diacylglucosamine-1-phosphate to form lipid A disaccharide, a precursor of lipid A, a phosphorylated glycolipid that anchors the lipopolysaccharide to the outer membrane of the cell. The chain is Lipid-A-disaccharide synthase from Burkholderia lata (strain ATCC 17760 / DSM 23089 / LMG 22485 / NCIMB 9086 / R18194 / 383).